Consider the following 853-residue polypeptide: Guanine nucleotide exchange protein smcr8a (853 aa).

The 173-residue stretch at 47–219 (TSYAKFSKDF…KETELQKMNN (173 aa)) folds into the uDENN FLCN/SMCR8-type domain. 2 disordered regions span residues 272–298 (PVMD…SRKS) and 418–454 (LKPG…SFSS). Residues 280–298 (DTNPSDSAENTVETESRKS) are compositionally biased toward polar residues. Positions 316-753 (RLKTLEELCD…LISHLADHRT (438 aa)) constitute a cDENN FLCN/SMCR8-type domain. Low complexity predominate over residues 421–432 (GVESGEGPPESS). Residues 433 to 454 (TSDITQETSEAADTETKGSFSS) show a composition bias toward polar residues. The dDENN FLCN/SMCR8-type domain occupies 762-826 (FLHIQGMLTQ…IIQYLSELIK (65 aa)).

It belongs to the SMCR8 family. As to quaternary structure, component of the C9orf72-SMCR8 complex. The C9orf72-SMCR8 complex associates with the ATG1/ULK1 kinase complex.

It localises to the cytoplasm. The protein localises to the nucleus. Component of the C9orf72-SMCR8 complex, a complex that has guanine nucleotide exchange factor (GEF) activity and regulates autophagy. In the complex, C9orf72 and SMCR8 probably constitute the catalytic subunits that promote the exchange of GDP to GTP, converting inactive GDP-bound RAB8A and RAB39B into their active GTP-bound form, thereby promoting autophagosome maturation. The C9orf72-SMCR8 complex also acts as a negative regulator of autophagy initiation by interacting with the ATG1/ULK1 kinase complex and inhibiting its protein kinase activity. The protein is Guanine nucleotide exchange protein smcr8a (smcr8a) of Danio rerio (Zebrafish).